We begin with the raw amino-acid sequence, 213 residues long: NADH dehydrogenase [ubiquinone] iron-sulfur protein 7, mitochondrial (213 aa).

Residues 1–31 constitute a mitochondrion transit peptide; the sequence is MALIARNAKLLTGTAPFLQRAATIHTTLPSL. Over residues 30 to 42 the composition is skewed to low complexity; that stretch reads SLSQQPASSPATS. The segment at 30–52 is disordered; it reads SLSQQPASSPATSGGAQPPSMNT. [4Fe-4S] cluster is bound by residues Cys-88, Cys-89, Cys-153, and Cys-183.

The protein belongs to the complex I 20 kDa subunit family. In terms of assembly, complex I is composed of about 45 different subunits. This is a component of the iron-sulfur (IP) fragment of the enzyme. The cofactor is [4Fe-4S] cluster.

The protein resides in the mitochondrion. It carries out the reaction a ubiquinone + NADH + 5 H(+)(in) = a ubiquinol + NAD(+) + 4 H(+)(out). Its function is as follows. Core subunit of the mitochondrial membrane respiratory chain NADH dehydrogenase (Complex I) that is believed to belong to the minimal assembly required for catalysis. Complex I functions in the transfer of electrons from NADH to the respiratory chain. The immediate electron acceptor for the enzyme is believed to be ubiquinone. This is NADH dehydrogenase [ubiquinone] iron-sulfur protein 7, mitochondrial from Solanum tuberosum (Potato).